We begin with the raw amino-acid sequence, 543 residues long: uncharacterized protein (543 aa).

One can recognise a PE domain in the interval 1–93 (MSFVTAAPEM…GGAYSSAEAA (93 aa)). Residues 194-214 (GGAGGPGGPTDVPAGTGGAGG) form a disordered region.

Belongs to the mycobacterial PE family. PGRS subfamily.

This is an uncharacterized protein from Mycobacterium tuberculosis (strain CDC 1551 / Oshkosh).